We begin with the raw amino-acid sequence, 179 residues long: Large ribosomal subunit protein uL5 (179 aa).

The protein belongs to the universal ribosomal protein uL5 family. Part of the 50S ribosomal subunit; part of the 5S rRNA/L5/L18/L25 subcomplex. Contacts the 5S rRNA and the P site tRNA. Forms a bridge to the 30S subunit in the 70S ribosome.

This is one of the proteins that bind and probably mediate the attachment of the 5S RNA into the large ribosomal subunit, where it forms part of the central protuberance. In the 70S ribosome it contacts protein S13 of the 30S subunit (bridge B1b), connecting the 2 subunits; this bridge is implicated in subunit movement. Contacts the P site tRNA; the 5S rRNA and some of its associated proteins might help stabilize positioning of ribosome-bound tRNAs. The chain is Large ribosomal subunit protein uL5 from Bacillus licheniformis (strain ATCC 14580 / DSM 13 / JCM 2505 / CCUG 7422 / NBRC 12200 / NCIMB 9375 / NCTC 10341 / NRRL NRS-1264 / Gibson 46).